We begin with the raw amino-acid sequence, 675 residues long: Nexilin (675 aa).

The disordered stretch occupies residues methionine 1 to glutamate 66. Lysine 16 carries the post-translational modification Phosphoserine. Residues glycine 27–glutamate 66 show a composition bias toward basic and acidic residues. Serine 80 carries the phosphoserine modification. The interval arginine 105–arginine 127 is disordered. Phosphoserine is present on serine 241. Disordered regions lie at residues leucine 254–lysine 278 and serine 313–arginine 336. 2 positions are modified to phosphoserine: serine 357 and serine 365. Position 370 is a phosphothreonine (threonine 370). 2 disordered regions span residues glutamate 487 to methionine 513 and leucine 551 to phenylalanine 584. A phosphoserine mark is found at serine 564 and serine 569. The Ig-like domain occupies proline 582 to threonine 670.

As to quaternary structure, interacts with F-actin. Abundantly expressed in heart and skeletal muscle, and at lower levels in placenta, lung, liver and pancreas. Also expressed in HeLaS3 and MOLT-4 cell lines.

It is found in the cytoplasm. It localises to the cytoskeleton. The protein localises to the cell junction. Its subcellular location is the adherens junction. The protein resides in the myofibril. It is found in the sarcomere. It localises to the z line. Its function is as follows. Involved in regulating cell migration through association with the actin cytoskeleton. Has an essential role in the maintenance of Z line and sarcomere integrity. The protein is Nexilin of Homo sapiens (Human).